Consider the following 131-residue polypeptide: D-ribose pyranase (131 aa).

Residue His-20 is the Proton donor of the active site. Substrate-binding positions include Asp-28, His-98, and Tyr-120 to Asn-122.

It belongs to the RbsD / FucU family. RbsD subfamily. In terms of assembly, homodecamer.

It is found in the cytoplasm. It carries out the reaction beta-D-ribopyranose = beta-D-ribofuranose. It functions in the pathway carbohydrate metabolism; D-ribose degradation; D-ribose 5-phosphate from beta-D-ribopyranose: step 1/2. Its function is as follows. Catalyzes the interconversion of beta-pyran and beta-furan forms of D-ribose. This Clostridium botulinum (strain Eklund 17B / Type B) protein is D-ribose pyranase.